Consider the following 465-residue polypeptide: tRNA-2-methylthio-N(6)-dimethylallyladenosine synthase (465 aa).

The MTTase N-terminal domain maps to Arg5 to Asn125. Residues Cys14, Cys50, Cys88, Cys166, Cys170, and Cys173 each coordinate [4Fe-4S] cluster. The Radical SAM core domain maps to Arg152–Ala384. The region spanning Lys387–Thr449 is the TRAM domain.

The protein belongs to the methylthiotransferase family. MiaB subfamily. As to quaternary structure, monomer. [4Fe-4S] cluster is required as a cofactor.

The protein resides in the cytoplasm. It catalyses the reaction N(6)-dimethylallyladenosine(37) in tRNA + (sulfur carrier)-SH + AH2 + 2 S-adenosyl-L-methionine = 2-methylsulfanyl-N(6)-dimethylallyladenosine(37) in tRNA + (sulfur carrier)-H + 5'-deoxyadenosine + L-methionine + A + S-adenosyl-L-homocysteine + 2 H(+). In terms of biological role, catalyzes the methylthiolation of N6-(dimethylallyl)adenosine (i(6)A), leading to the formation of 2-methylthio-N6-(dimethylallyl)adenosine (ms(2)i(6)A) at position 37 in tRNAs that read codons beginning with uridine. In Bradyrhizobium diazoefficiens (strain JCM 10833 / BCRC 13528 / IAM 13628 / NBRC 14792 / USDA 110), this protein is tRNA-2-methylthio-N(6)-dimethylallyladenosine synthase.